Consider the following 423-residue polypeptide: AP-1 complex subunit mu-1 (423 aa).

The residue at position 2 (Ser2) is an N-acetylserine. Phosphothreonine occurs at positions 152, 154, and 223. Positions Lys168–Arg421 constitute an MHD domain.

It belongs to the adaptor complexes medium subunit family. As to quaternary structure, adaptor protein complex 1 (AP-1) is a heterotetramer composed of two large adaptins (gamma-type subunit AP1G1 and beta-type subunit AP1B1), a medium adaptin (mu-type subunit AP1M1 or AP1M2) and a small adaptin (sigma-type subunit AP1S1 or AP1S2 or AP1S3). Interacts with MARCHF11. Phosphorylation of membrane-bound AP1M1/AP1M2 increases its affinity for sorting signals.

The protein localises to the cytoplasmic vesicle. The protein resides in the clathrin-coated vesicle membrane. It is found in the golgi apparatus. Functionally, subunit of clathrin-associated adaptor protein complex 1 that plays a role in protein sorting in the trans-Golgi network (TGN) and endosomes. The AP complexes mediate the recruitment of clathrin to membranes and the recognition of sorting signals within the cytosolic tails of transmembrane cargo molecules. This chain is AP-1 complex subunit mu-1, found in Rattus norvegicus (Rat).